A 455-amino-acid polypeptide reads, in one-letter code: Nuclear mRNA export protein THP1 (455 aa).

The PCI domain maps to 220–431 (IEYRYLLGRY…QLCVVKKTTM (212 aa)).

As to quaternary structure, heterodimer with THP1. The SAC3-THP1 complex interacts with CDC31 and SUS1, and with the mRNA export factor MEX67-MTR2, the TREX complex component SUB2, and the nucleoporin NUP1.

It localises to the nucleus envelope. In terms of biological role, component of the SAC3-THP1 complex, which functions in transcription-coupled mRNA export from the nucleus to the cytoplasm. SAC3-THP1 functions in docking export-competent ribonucleoprotein particles (mRNPs) to the nuclear entrance of the nuclear pore complex (nuclear basket), by association with components of the nuclear mRNA export machinery (MEX67-MTR2 and SUB2) in the nucleoplasm and the nucleoporin NUP1 at the nuclear basket. THP1 binds to RNA in vitro. The sequence is that of Nuclear mRNA export protein THP1 (THP1) from Saccharomyces cerevisiae (strain ATCC 204508 / S288c) (Baker's yeast).